A 1199-amino-acid chain; its full sequence is Chromatin structure-remodeling complex subunit snf21 (1199 aa).

Residues 256-328 (QRSDRERRLK…AKQRLQALKE (73 aa)) enclose the HSA domain. Residues 429–594 (ISLYNNHLNG…WALLNFVLPR (166 aa)) enclose the Helicase ATP-binding domain. 442 to 449 (DEMGLGKT) lines the ATP pocket. Residues 544–547 (DEGH) carry the DEGH box motif. In terms of domain architecture, Helicase C-terminal spans 740–903 (LLDRILPKLF…STPEEREAFL (164 aa)). The tract at residues 1017–1059 (MESEARPTRGRPKRNIASVDETPALTLNGKPKKKRGPAPDTLT) is disordered. Residues 1061–1171 (EHRSLLRRVC…TAMETKIEEL (111 aa)) enclose the Bromo domain.

It belongs to the SNF2/RAD54 helicase family. As to quaternary structure, component of the RSC complex composed of at least arp9, arp42, rsc1, rsc4, rsc7, rsc9, rsc58, sfh1, snf21, ssr1, ssr2, ssr3 and ssr4. The complex interacts with histone and histone variant components of centromeric chromatin.

The protein resides in the nucleus. Helicase. Component of the chromatin structure remodeling complex (RSC), which is involved in transcription regulation and nucleosome positioning. Controls particularly membrane and organelle development genes. In Schizosaccharomyces pombe (strain 972 / ATCC 24843) (Fission yeast), this protein is Chromatin structure-remodeling complex subunit snf21 (snf21).